Here is a 352-residue protein sequence, read N- to C-terminus: Ubiquitin thioesterase otulin (352 aa).

Residues 1-49 (MSRGTMPQPGAWPGASCAETPAREAGAAARDGGKVTAGAQPRAATRCPA) form a disordered region. A compositionally biased stretch (low complexity) spans 18–30 (AETPAREAGAAAR). Residues 49–73 (AEHEEDMYRAADEIEKEKELLIHER) adopt a coiled-coil conformation. The PIM motif motif lies at 52–57 (EEDMYR). At Y56 the chain carries Phosphotyrosine. Linear diubiquitin binding regions lie at residues 95 to 96 (EW) and 124 to 126 (RGD). An OTU domain is found at 118–346 (TSIRRVRGDN…DRHYNIPVRV (229 aa)). The active site involves D126. The Nucleophile role is filled by C129. Linear diubiquitin binding stretches follow at residues 255 to 259 (FFSVL), 283 to 289 (TGGLEQV), and 336 to 338 (DDR). The active site involves H339. The PDZ-binding signature appears at 349–352 (ETSV).

The protein belongs to the peptidase C65 family. Otulin subfamily. In terms of assembly, interacts (via the PUB domain) with RNF31 (via the PIM motif); the interaction is direct. Interacts with DVL2. Post-translationally, ubiquitinated. In terms of processing, acetylated. Phosphorylated. Phosphorylation at Tyr-56 prevents interaction with RNF31; dephosphorylation promotes interaction with RNF31 and the LUBAC complex.

The protein resides in the cytoplasm. The catalysed reaction is Thiol-dependent hydrolysis of ester, thioester, amide, peptide and isopeptide bonds formed by the C-terminal Gly of ubiquitin (a 76-residue protein attached to proteins as an intracellular targeting signal).. Functionally, deubiquitinase that specifically removes linear ('Met-1'-linked) polyubiquitin chains to substrates and acts as a regulator of angiogenesis and innate immune response. Required during angiogenesis, craniofacial and neuronal development by regulating the canonical Wnt signaling together with the LUBAC complex. Acts as a negative regulator of NF-kappa-B by regulating the activity of the LUBAC complex. OTULIN function is mainly restricted to homeostasis of the LUBAC complex: acts by removing 'Met-1'-linked autoubiquitination of the LUBAC complex, thereby preventing inactivation of the LUBAC complex. Acts as a key negative regulator of inflammation by restricting spontaneous inflammation and maintaining immune homeostasis. In myeloid cell, required to prevent unwarranted secretion of cytokines leading to inflammation and autoimmunity by restricting linear polyubiquitin formation. Plays a role in innate immune response by restricting linear polyubiquitin formation on LUBAC complex in response to NOD2 stimulation, probably to limit NOD2-dependent pro-inflammatory signaling. This is Ubiquitin thioesterase otulin from Mus musculus (Mouse).